The primary structure comprises 602 residues: Proline--tRNA ligase (602 aa).

This sequence belongs to the class-II aminoacyl-tRNA synthetase family. ProS type 1 subfamily. As to quaternary structure, homodimer.

The protein resides in the cytoplasm. The catalysed reaction is tRNA(Pro) + L-proline + ATP = L-prolyl-tRNA(Pro) + AMP + diphosphate. Its function is as follows. Catalyzes the attachment of proline to tRNA(Pro) in a two-step reaction: proline is first activated by ATP to form Pro-AMP and then transferred to the acceptor end of tRNA(Pro). As ProRS can inadvertently accommodate and process non-cognate amino acids such as alanine and cysteine, to avoid such errors it has two additional distinct editing activities against alanine. One activity is designated as 'pretransfer' editing and involves the tRNA(Pro)-independent hydrolysis of activated Ala-AMP. The other activity is designated 'posttransfer' editing and involves deacylation of mischarged Ala-tRNA(Pro). The misacylated Cys-tRNA(Pro) is not edited by ProRS. The protein is Proline--tRNA ligase of Thermosynechococcus vestitus (strain NIES-2133 / IAM M-273 / BP-1).